The sequence spans 108 residues: Insulin (108 aa).

The first 23 residues, 1 to 23 (MALWILLPLLALLILWGPDPAQA), serve as a signal peptide directing secretion. 2 cysteine pairs are disulfide-bonded: C30/C94 and C43/C107. Positions 57-88 (EVEDPQVGQVELGAGPGAGSEQTLALEVARQA) are cleaved as a propeptide — c peptide.

The protein belongs to the insulin family. Heterodimer of a B chain and an A chain linked by two disulfide bonds.

Its subcellular location is the secreted. Insulin decreases blood glucose concentration. It increases cell permeability to monosaccharides, amino acids and fatty acids. It accelerates glycolysis, the pentose phosphate cycle, and glycogen synthesis in liver. In Rodentia sp, this protein is Insulin (INS).